A 367-amino-acid chain; its full sequence is tRNA 2-selenouridine synthase (367 aa).

A Rhodanese domain is found at 12–136 (FLNDRPLMDA…LRGFLIDTLE (125 aa)). Catalysis depends on cysteine 95, which acts as the S-selanylcysteine intermediate.

The protein belongs to the SelU family. Monomer.

It carries out the reaction 5-methylaminomethyl-2-thiouridine(34) in tRNA + selenophosphate + (2E)-geranyl diphosphate + H2O + H(+) = 5-methylaminomethyl-2-selenouridine(34) in tRNA + (2E)-thiogeraniol + phosphate + diphosphate. The enzyme catalyses 5-methylaminomethyl-2-thiouridine(34) in tRNA + (2E)-geranyl diphosphate = 5-methylaminomethyl-S-(2E)-geranyl-thiouridine(34) in tRNA + diphosphate. It catalyses the reaction 5-methylaminomethyl-S-(2E)-geranyl-thiouridine(34) in tRNA + selenophosphate + H(+) = 5-methylaminomethyl-2-(Se-phospho)selenouridine(34) in tRNA + (2E)-thiogeraniol. The catalysed reaction is 5-methylaminomethyl-2-(Se-phospho)selenouridine(34) in tRNA + H2O = 5-methylaminomethyl-2-selenouridine(34) in tRNA + phosphate. Its function is as follows. Involved in the post-transcriptional modification of the uridine at the wobble position (U34) of tRNA(Lys), tRNA(Glu) and tRNA(Gln). Catalyzes the conversion of 2-thiouridine (S2U-RNA) to 2-selenouridine (Se2U-RNA). Acts in a two-step process involving geranylation of 2-thiouridine (S2U) to S-geranyl-2-thiouridine (geS2U) and subsequent selenation of the latter derivative to 2-selenouridine (Se2U) in the tRNA chain. The chain is tRNA 2-selenouridine synthase from Pseudomonas fluorescens (strain Pf0-1).